A 223-amino-acid chain; its full sequence is uncharacterized protein (223 aa).

Transmembrane regions (helical) follow at residues 22-42, 59-79, 85-105, and 164-184; these read LTVG…FVVV, GVAL…ATLI, IFSL…WCSM, and MAWA…SQAF.

It belongs to the Rht family.

It is found in the cell membrane. This is an uncharacterized protein from Escherichia coli (strain K12).